The primary structure comprises 105 residues: Large ribosomal subunit protein uL24 (105 aa).

Belongs to the universal ribosomal protein uL24 family. As to quaternary structure, part of the 50S ribosomal subunit.

Its function is as follows. One of two assembly initiator proteins, it binds directly to the 5'-end of the 23S rRNA, where it nucleates assembly of the 50S subunit. Functionally, one of the proteins that surrounds the polypeptide exit tunnel on the outside of the subunit. The protein is Large ribosomal subunit protein uL24 of Rhizorhabdus wittichii (strain DSM 6014 / CCUG 31198 / JCM 15750 / NBRC 105917 / EY 4224 / RW1) (Sphingomonas wittichii).